The sequence spans 424 residues: Serine hydroxymethyltransferase (424 aa).

(6S)-5,6,7,8-tetrahydrofolate is bound by residues L118 and 122 to 124 (GHL). K227 is modified (N6-(pyridoxal phosphate)lysine). Residue 351-353 (SPF) coordinates (6S)-5,6,7,8-tetrahydrofolate.

This sequence belongs to the SHMT family. In terms of assembly, homodimer. Pyridoxal 5'-phosphate serves as cofactor.

It localises to the cytoplasm. The enzyme catalyses (6R)-5,10-methylene-5,6,7,8-tetrahydrofolate + glycine + H2O = (6S)-5,6,7,8-tetrahydrofolate + L-serine. It functions in the pathway one-carbon metabolism; tetrahydrofolate interconversion. Its pathway is amino-acid biosynthesis; glycine biosynthesis; glycine from L-serine: step 1/1. Functionally, catalyzes the reversible interconversion of serine and glycine with tetrahydrofolate (THF) serving as the one-carbon carrier. This reaction serves as the major source of one-carbon groups required for the biosynthesis of purines, thymidylate, methionine, and other important biomolecules. Also exhibits THF-independent aldolase activity toward beta-hydroxyamino acids, producing glycine and aldehydes, via a retro-aldol mechanism. This is Serine hydroxymethyltransferase from Pseudothermotoga lettingae (strain ATCC BAA-301 / DSM 14385 / NBRC 107922 / TMO) (Thermotoga lettingae).